The chain runs to 449 residues: Glucose-6-phosphate isomerase (449 aa).

The Proton donor role is filled by Glu-291. Catalysis depends on residues His-312 and Lys-426.

This sequence belongs to the GPI family.

It localises to the cytoplasm. The enzyme catalyses alpha-D-glucose 6-phosphate = beta-D-fructose 6-phosphate. Its pathway is carbohydrate biosynthesis; gluconeogenesis. It functions in the pathway carbohydrate degradation; glycolysis; D-glyceraldehyde 3-phosphate and glycerone phosphate from D-glucose: step 2/4. Catalyzes the reversible isomerization of glucose-6-phosphate to fructose-6-phosphate. The sequence is that of Glucose-6-phosphate isomerase from Streptococcus pyogenes serotype M28 (strain MGAS6180).